The following is a 147-amino-acid chain: Large-conductance mechanosensitive channel (147 aa).

The next 2 helical transmembrane spans lie at phenylalanine 8 to glycine 28 and glycine 81 to isoleucine 101.

Belongs to the MscL family. As to quaternary structure, homopentamer.

The protein resides in the cell inner membrane. In terms of biological role, channel that opens in response to stretch forces in the membrane lipid bilayer. May participate in the regulation of osmotic pressure changes within the cell. This chain is Large-conductance mechanosensitive channel, found in Trichlorobacter lovleyi (strain ATCC BAA-1151 / DSM 17278 / SZ) (Geobacter lovleyi).